A 296-amino-acid polypeptide reads, in one-letter code: Glycine--tRNA ligase alpha subunit (296 aa).

This sequence belongs to the class-II aminoacyl-tRNA synthetase family. Tetramer of two alpha and two beta subunits.

The protein resides in the cytoplasm. The enzyme catalyses tRNA(Gly) + glycine + ATP = glycyl-tRNA(Gly) + AMP + diphosphate. The polypeptide is Glycine--tRNA ligase alpha subunit (Prochlorococcus marinus (strain SARG / CCMP1375 / SS120)).